Reading from the N-terminus, the 170-residue chain is Crossover junction endodeoxyribonuclease RuvC (170 aa).

Active-site residues include Asp-11, Glu-71, and Asp-143. The Mg(2+) site is built by Asp-11, Glu-71, and Asp-143.

This sequence belongs to the RuvC family. Homodimer which binds Holliday junction (HJ) DNA. The HJ becomes 2-fold symmetrical on binding to RuvC with unstacked arms; it has a different conformation from HJ DNA in complex with RuvA. In the full resolvosome a probable DNA-RuvA(4)-RuvB(12)-RuvC(2) complex forms which resolves the HJ. The cofactor is Mg(2+).

The protein localises to the cytoplasm. The enzyme catalyses Endonucleolytic cleavage at a junction such as a reciprocal single-stranded crossover between two homologous DNA duplexes (Holliday junction).. In terms of biological role, the RuvA-RuvB-RuvC complex processes Holliday junction (HJ) DNA during genetic recombination and DNA repair. Endonuclease that resolves HJ intermediates. Cleaves cruciform DNA by making single-stranded nicks across the HJ at symmetrical positions within the homologous arms, yielding a 5'-phosphate and a 3'-hydroxyl group; requires a central core of homology in the junction. The consensus cleavage sequence is 5'-(A/T)TT(C/G)-3'. Cleavage occurs on the 3'-side of the TT dinucleotide at the point of strand exchange. HJ branch migration catalyzed by RuvA-RuvB allows RuvC to scan DNA until it finds its consensus sequence, where it cleaves and resolves the cruciform DNA. This is Crossover junction endodeoxyribonuclease RuvC from Sinorhizobium fredii (strain NBRC 101917 / NGR234).